A 106-amino-acid polypeptide reads, in one-letter code: UPF0145 protein Cthe_0398 (106 aa).

This sequence belongs to the UPF0145 family.

This Acetivibrio thermocellus (strain ATCC 27405 / DSM 1237 / JCM 9322 / NBRC 103400 / NCIMB 10682 / NRRL B-4536 / VPI 7372) (Clostridium thermocellum) protein is UPF0145 protein Cthe_0398.